A 267-amino-acid chain; its full sequence is V-type proton ATPase subunit D (267 aa).

Belongs to the V-ATPase D subunit family. V-ATPase is a heteromultimeric enzyme composed of a peripheral catalytic V1 complex (components A to H) attached to an integral membrane V0 proton pore complex (components: a, c, c', c'', d, e, f and VOA1).

The protein localises to the vacuole membrane. Its function is as follows. Subunit of the V1 complex of vacuolar(H+)-ATPase (V-ATPase), a multisubunit enzyme composed of a peripheral complex (V1) that hydrolyzes ATP and a membrane integral complex (V0) that translocates protons. V-ATPase is responsible for acidifying and maintaining the pH of intracellular compartments. This is V-type proton ATPase subunit D (VMA8) from Candida albicans (strain SC5314 / ATCC MYA-2876) (Yeast).